Here is a 265-residue protein sequence, read N- to C-terminus: Shikimate dehydrogenase (NADP(+)) (265 aa).

Shikimate is bound by residues Ser-15–Ser-17 and Thr-62. The active-site Proton acceptor is the Lys-66. 2 residues coordinate shikimate: Asn-87 and Asp-102. Residues Gly-125 to Ala-129, Asn-149 to Lys-154, and Leu-209 contribute to the NADP(+) site. Tyr-211 provides a ligand contact to shikimate. Gly-233 lines the NADP(+) pocket.

The protein belongs to the shikimate dehydrogenase family. In terms of assembly, homodimer.

It catalyses the reaction shikimate + NADP(+) = 3-dehydroshikimate + NADPH + H(+). It functions in the pathway metabolic intermediate biosynthesis; chorismate biosynthesis; chorismate from D-erythrose 4-phosphate and phosphoenolpyruvate: step 4/7. Involved in the biosynthesis of the chorismate, which leads to the biosynthesis of aromatic amino acids. Catalyzes the reversible NADPH linked reduction of 3-dehydroshikimate (DHSA) to yield shikimate (SA). This Legionella pneumophila (strain Lens) protein is Shikimate dehydrogenase (NADP(+)).